The following is a 1829-amino-acid chain: MNEGEVVLTPEQIQTLRGYASRGDTYGGWRYLANLGDRYADDAAAIVGKDANLNGLNLWMKKGVENLWDDTVGKKTRLEKFDRVALQHFRQYARLINQNNGRLPNTSEIERSYYKAVTDNGVSSSAAIDLVINRSLPDMADGYWALGLGIEAERIHNEQAVNNPNGSERDNRKQLISALDKGFDGSFKEKHFTFLQSVMMDVTKLGVEYTIDGWQKIGGWGNGIINDLYKSVVKREWTGIFEIVNNNIKQGNEAFKNEINSLVHDMKAAGKEFGDDLNTQWNNLTQAAEIIYNDIVDNTSQGIEKGVKAIKELSEKMKNAASDLADGSAEKAKQVVEDLAQAAKEAYENAKSTAEKAAQAAREFFKGLPSFKDLAEKFRDLFPNPEGWIDDGHQCLAPWVKETKKRNGKYHVYDPLALDLDGDGIETVATKGFAGSLFDHTNNGIRTATGWVSADDGLLVRDLNGNGIIDNGAELFGDNTKLADGSFAKHGYAALAELDSNGDNIINAADAAFQTLRVWQDLNQDGISQANELRTLEELGIQSLDLAYKDVNKNLGNGNTLAQQGSYTKTDGTTAKMGDLLLAADNLHSRFKDKVELTAEQAKAANLAGIGRLRDLREAAALSGDLANMLKAYSAAETKEAQLALLDNLIHKWAETDSNWGKKSPMRLSTDWTQTANEGIALTPSQVAQLKKNALVSLSDKAKAAIDAARDRIAVLDAYTGQDSNTLYYMSEEDALNIVKVTNDTYDHLAKNIYQNLLFQTRLQPYLNQISFKMENDTFTLDFSGLVQAFNHVKETNPQKAFVDLAEMLAYGELRSWYEGRRLMTDYVEEAKKAGKFEDYQKVLGQETVALLAKTSGTQADDILQNVGFGHNKNVSLYGNDGNDTLIGGAGNDYLEGGSGSDTYVFGEGFGQDTVYNYDYATGRKDIIRFTDGITADMLTFTREGNHLLIKAKDGSGQVTVQSYFQNDGSGAYRIDEIHFDNGKVLDVATVKELVQQSTDGSDRLYAYQSGNTLNGGLGDDYLYGADGDDLLNGDAGNDSIYSGNGNDTLDGGEGNDALYGYNGNDALNGGEGNDHLNGEDGNDTLIGGAGNDYLEGGSGSDTYVFGKGFGQDTVYNYDYATGRKDIIRFTDGITADMLTFTREGNHLLIKAKDGSGQVTVQYYFQNDGSGAYRIDEIHFDNGKVLDVATVKELVQQSTDGSDRLYAYQSGNTLNGGLGDDYLYGADGDDLLNGDAGNDSIYSGNGNDTLDGGEGNDALYGYNGNDALNGGEGNDHLNGEDGNDTLIGGAGNDYLEGGSGSDTYVFGKGFGQDAVYNYDYATGRKDIIRFTDGITADMLTFTREGNHLLIKAKDGSGQVTVQSYFQNDGSGAYRIDEIHFDNGKVLDVATVKELVQQSTDGSDRLYAYQSGNTLNGGLGDDYLYGADGDDLLNGDAGNDSIYSGNGNDTLNGGEGNDALYGYNGNDALNGGEGNDHLNGEDGNDTLIGGAGNDYLEGGSGSDTYVFGKGFGQDAVYNYDYATGRKDIIRFTDGITADMLTFTREGNHLLIKAKDGSGQVTVQSYFQNDGSGAYRIDEIHFDNGKVLDVATVKELVQQSTDGSDRLYAYQSGSTLNGGLGDDYLYGADGDDLLNGDAGNDSIYSGNGNDTLDGGEGNDALYGYNGNDALNGGEGNDHLNGEDGNDTLIGGAGNDYLEGGSGSDTYVFGEGFGQDTVYNYHVDKNSDTMHFKGFKAADVHFIRSGSDLVLSASEQDNVRISGFFYGENHRVDTFVFDDAAISNPDFAKYINAGNNLVQSMSVFGSNTAATGGNVDANIQSVQQPLLVTPSA.

Hemolysin-type calcium-binding repeat units lie at residues 869–886 (FGHN…NDTL), 887–904 (IGGA…SDTY), 1015–1032 (NGGL…DDLL), 1033–1050 (NGDA…NDTL), 1051–1068 (DGGE…NDAL), 1069–1086 (NGGE…NDTL), 1087–1104 (IGGA…SDTY), 1215–1232 (NGGL…DDLL), 1233–1250 (NGDA…NDTL), 1251–1268 (DGGE…NDAL), 1269–1286 (NGGE…NDTL), 1287–1304 (IGGA…SDTY), 1415–1432 (NGGL…DDLL), 1433–1450 (NGDA…NDTL), 1451–1468 (NGGE…NDAL), 1469–1486 (NGGE…NDTL), 1487–1504 (IGGA…SDTY), 1615–1632 (NGGL…DDLL), 1633–1650 (NGDA…NDTL), 1651–1668 (DGGE…NDAL), 1669–1686 (NGGE…NDTL), and 1687–1704 (IGGA…SDTY). A disordered region spans residues 1671–1690 (GEGNDHLNGEDGNDTLIGGA).

It belongs to the RTX prokaryotic toxin (TC 1.C.11) family.

Its subcellular location is the cell outer membrane. The protein localises to the secreted. In terms of biological role, may participate in the pathogenesis of meningococcal disease. The sequence is that of Iron-regulated protein FrpC (frpC) from Neisseria meningitidis serogroup B (strain ATCC BAA-335 / MC58).